The chain runs to 364 residues: Glycosyltransferase 8 domain-containing protein 1 (364 aa).

Topologically, residues 1–5 (MRRVH) are cytoplasmic. Residues 6-26 (ITVILLAAVIFLLVLHHNILG) traverse the membrane as a helical; Signal-anchor for type II membrane protein segment. The Lumenal segment spans residues 27-364 (LSDILKRQNS…QFSLIRRHAE (338 aa)). N-linked (GlcNAc...) asparagine glycans are attached at residues Asn-102, Asn-247, and Asn-255.

This sequence belongs to the glycosyltransferase 8 family.

Its subcellular location is the membrane. The polypeptide is Glycosyltransferase 8 domain-containing protein 1 (glt8d1) (Xenopus laevis (African clawed frog)).